The chain runs to 510 residues: Ectonucleoside triphosphate diphosphohydrolase 1 (510 aa).

Topologically, residues 1-16 (MEDRRESELKTFCSKN) are cytoplasmic. Residues 17-37 (ILVILGFSSIIAVIALLALGL) traverse the membrane as a helical segment. The Extracellular segment spans residues 38 to 477 (TQNKPLPENV…SSTRLSHSTY (440 aa)). N-linked (GlcNAc...) asparagine glycosylation is present at N73. C84 and C108 are disulfide-bonded. The active-site Proton acceptor is the E174. Residues N245, N274, N291, and N333 are each glycosylated (N-linked (GlcNAc...) asparagine). Intrachain disulfides connect C255–C300 and C281–C324. An intrachain disulfide couples C337 to C342. N370 carries N-linked (GlcNAc...) asparagine glycosylation. A disulfide bridge links C390 with C413. N-linked (GlcNAc...) asparagine glycosylation is present at N457. Residues 478–498 (VFLMVLFSLILVIVVIIGLFV) traverse the membrane as a helical segment. The Cytoplasmic segment spans residues 499–510 (CHRPSYFWKDMV).

It belongs to the GDA1/CD39 NTPase family. Homodimer; disulfide-linked. Ca(2+) serves as cofactor. Requires Mg(2+) as cofactor. In terms of processing, N-glycosylated. Post-translationally, cleaved into two polypeptides that seem to stay together by non-covalent interactions. The N-terminus is blocked. In terms of processing, palmitoylated on Cys-13; which is required for caveola targeting. In terms of tissue distribution, highest expression found in vascular endothelium, smooth muscle, spleen and lung (at protein level). High expression also found in stomach, duodenum, kidney, lymph node and aorta (at protein level).

It localises to the membrane. Its subcellular location is the caveola. The catalysed reaction is a ribonucleoside 5'-triphosphate + 2 H2O = a ribonucleoside 5'-phosphate + 2 phosphate + 2 H(+). It carries out the reaction a ribonucleoside 5'-triphosphate + H2O = a ribonucleoside 5'-diphosphate + phosphate + H(+). The enzyme catalyses a ribonucleoside 5'-diphosphate + H2O = a ribonucleoside 5'-phosphate + phosphate + H(+). It catalyses the reaction ATP + 2 H2O = AMP + 2 phosphate + 2 H(+). The catalysed reaction is ATP + H2O = ADP + phosphate + H(+). It carries out the reaction ADP + H2O = AMP + phosphate + H(+). The enzyme catalyses CTP + 2 H2O = CMP + 2 phosphate + 2 H(+). It catalyses the reaction CTP + H2O = CDP + phosphate + H(+). The catalysed reaction is CDP + H2O = CMP + phosphate + H(+). It carries out the reaction GTP + 2 H2O = GMP + 2 phosphate + 2 H(+). The enzyme catalyses GTP + H2O = GDP + phosphate + H(+). It catalyses the reaction GDP + H2O = GMP + phosphate + H(+). The catalysed reaction is ITP + 2 H2O = IMP + 2 phosphate + 2 H(+). It carries out the reaction ITP + H2O = IDP + phosphate + H(+). The enzyme catalyses IDP + H2O = IMP + phosphate + H(+). It catalyses the reaction UTP + 2 H2O = UMP + 2 phosphate + 2 H(+). The catalysed reaction is UTP + H2O = UDP + phosphate + H(+). It carries out the reaction UDP + H2O = UMP + phosphate + H(+). The ATP diphosphohydrolase activity is decreased by half by sodium azide. Functionally, catalyzes the hydrolysis of both di- and triphosphate nucleotides (NDPs and NTPs) and hydrolyze NTPs to nucleotide monophosphates (NMPs) in two distinct successive phosphate-releasing steps, with NDPs as intermediates and participates in the regulation of extracellular levels of nucleotides. By hydrolyzing proinflammatory ATP and platelet-activating ADP to AMP, it blocks platelet aggregation and supports blood flow. This is Ectonucleoside triphosphate diphosphohydrolase 1 from Sus scrofa (Pig).